Reading from the N-terminus, the 136-residue chain is Small ribosomal subunit protein uS9 (136 aa).

The protein belongs to the universal ribosomal protein uS9 family.

This chain is Small ribosomal subunit protein uS9, found in Borrelia garinii subsp. bavariensis (strain ATCC BAA-2496 / DSM 23469 / PBi) (Borreliella bavariensis).